Here is a 1270-residue protein sequence, read N- to C-terminus: DNA-directed RNA polymerase subunit beta (1270 aa).

It belongs to the RNA polymerase beta chain family. As to quaternary structure, the RNAP catalytic core consists of 2 alpha, 1 beta, 1 beta' and 1 omega subunit. When a sigma factor is associated with the core the holoenzyme is formed, which can initiate transcription.

The enzyme catalyses RNA(n) + a ribonucleoside 5'-triphosphate = RNA(n+1) + diphosphate. DNA-dependent RNA polymerase catalyzes the transcription of DNA into RNA using the four ribonucleoside triphosphates as substrates. In Phocaeicola vulgatus (strain ATCC 8482 / DSM 1447 / JCM 5826 / CCUG 4940 / NBRC 14291 / NCTC 11154) (Bacteroides vulgatus), this protein is DNA-directed RNA polymerase subunit beta.